Consider the following 96-residue polypeptide: Co-chaperonin GroES (96 aa).

Belongs to the GroES chaperonin family. Heptamer of 7 subunits arranged in a ring. Interacts with the chaperonin GroEL.

The protein localises to the cytoplasm. Together with the chaperonin GroEL, plays an essential role in assisting protein folding. The GroEL-GroES system forms a nano-cage that allows encapsulation of the non-native substrate proteins and provides a physical environment optimized to promote and accelerate protein folding. GroES binds to the apical surface of the GroEL ring, thereby capping the opening of the GroEL channel. The sequence is that of Co-chaperonin GroES from Citrifermentans bemidjiense (strain ATCC BAA-1014 / DSM 16622 / JCM 12645 / Bem) (Geobacter bemidjiensis).